Consider the following 293-residue polypeptide: Protease HtpX (293 aa).

2 helical membrane passes run 4–24 (IALF…ILSL) and 32–52 (VMGL…VSLL). Residue His139 coordinates Zn(2+). Glu140 is a catalytic residue. His143 serves as a coordination point for Zn(2+). 2 consecutive transmembrane segments (helical) span residues 158 to 178 (IVNT…AGFM) and 193 to 213 (MVYF…ASTI). Residue Glu222 participates in Zn(2+) binding.

The protein belongs to the peptidase M48B family. Zn(2+) is required as a cofactor.

The protein resides in the cell inner membrane. The sequence is that of Protease HtpX from Erwinia tasmaniensis (strain DSM 17950 / CFBP 7177 / CIP 109463 / NCPPB 4357 / Et1/99).